Here is a 473-residue protein sequence, read N- to C-terminus: H(+)/Cl(-) exchange transporter ClcA (473 aa).

Residues 1–32 (MKTDTSTFLAQQIVRLRRRDQIRRLMQRDKTP) are Cytoplasmic-facing. Residues 33–69 (LAILFMAAVVGTLTGLVGVAFEKAVSWVQNMRIGALV) form a helical membrane-spanning segment. Over 70–76 (QVADHAF) the chain is Periplasmic. A helical transmembrane segment spans residues 77–100 (LLWPLAFILSALLAMVGYFLVRKF). Residues 106–110 (GSGIP) carry the Selectivity filter part_1 motif. Chloride is bound at residue Ser-107. An intramembrane region (helical) is located at residues 109–116 (IPEIEGAL). Residues 117–123 (EELRPVR) are Cytoplasmic-facing. A run of 2 helical transmembrane segments spans residues 124–141 (WWRV…TLGA) and 148–166 (EGPT…LDVF). The Selectivity filter part_2 motif lies at 146-150 (GREGP). The Cytoplasmic segment spans residues 167–176 (RMRSAEARHT). Intramembrane regions (helical) lie at residues 177-189 (LLAT…LSAA) and 193-201 (PLAGILFII). At 202–214 (EEMRPQFRYNLIS) the chain is on the cytoplasmic side. Residues 215 to 232 (IKAVFTGVIMSSIVFRIF) traverse the membrane as a helical segment. Over 233 to 252 (NGEAPIIEVGKLSDAPVNTL) the chain is Periplasmic. A helical membrane pass occupies residues 253–281 (WLYLILGIIFGCVGPVFNSLVLRTQDMFQ). At 282-287 (RFHGGE) the chain is on the cytoplasmic side. Residues 288–309 (IKKWVLMGGAIGGLCGILGLIE) form a helical membrane-spanning segment. The Periplasmic portion of the chain corresponds to 310 to 329 (PEAAGGGFNLIPIAAAGNFS). A run of 2 helical transmembrane segments spans residues 330–349 (VGLL…LCFS) and 355–376 (GIFA…MAAA). The Selectivity filter part_3 motif lies at 355 to 359 (GIFAP). 2 residues coordinate chloride: Ile-356 and Phe-357. Residues 377-386 (VLFPQYHLEA) lie on the Periplasmic side of the membrane. Residues 387–401 (GTFAIAGMGALMAAS) constitute an intramembrane region (helical). Positions 402–404 (VRA) form an intramembrane region, note=Loop between two helices. Positions 405–416 (PLTGIVLVLEMT) form an intramembrane region, helical. Residues 417-421 (DNYQL) constitute an intramembrane region (note=Loop between two helices). The chain crosses the membrane as a helical span at residues 422–438 (ILPMIITCLGATLLAQF). The Cytoplasmic segment spans residues 439–473 (LGGKPLYSTILARTLAKQDAEQAAKNQNASAGENT). Tyr-445 serves as a coordination point for chloride.

It belongs to the chloride channel (TC 2.A.49) family. ClcA subfamily. As to quaternary structure, homodimer.

The protein localises to the cell inner membrane. The enzyme catalyses 2 chloride(in) + H(+)(out) = 2 chloride(out) + H(+)(in). Its function is as follows. Proton-coupled chloride transporter. Functions as antiport system and exchanges two chloride ions for 1 proton. Probably acts as an electrical shunt for an outwardly-directed proton pump that is linked to amino acid decarboxylation, as part of the extreme acid resistance (XAR) response. In Salmonella choleraesuis (strain SC-B67), this protein is H(+)/Cl(-) exchange transporter ClcA.